We begin with the raw amino-acid sequence, 214 residues long: MALGILGRKVGMTQIFSPEGLAIPVTVVQAGPCTVTQIKTQATDGYNAVQLGYWPTAEKHLTRAQRGHLSKAGVTELLRHLREFRVDQPEAYQLGQKITVEIFSPGQLLDVAGTSIGRGFAGYQKRHHFGRGPMSHGSKNHRRPGSVGAGTTPGRVFPGLRMAGRMGGCRVTIRKLQLVQVDPERNLLIIKGSVPGVEGGLLEITPAKQVGNKR.

Residues 129–155 form a disordered region; it reads FGRGPMSHGSKNHRRPGSVGAGTTPGR.

The protein belongs to the universal ribosomal protein uL3 family. In terms of assembly, part of the 50S ribosomal subunit. Forms a cluster with proteins L14 and L19.

In terms of biological role, one of the primary rRNA binding proteins, it binds directly near the 3'-end of the 23S rRNA, where it nucleates assembly of the 50S subunit. The chain is Large ribosomal subunit protein uL3 from Synechococcus sp. (strain JA-3-3Ab) (Cyanobacteria bacterium Yellowstone A-Prime).